The primary structure comprises 203 residues: Urease accessory protein UreG (203 aa).

A GTP-binding site is contributed by 12 to 19 (GPVGSGKT).

Belongs to the SIMIBI class G3E GTPase family. UreG subfamily. Homodimer. UreD, UreF and UreG form a complex that acts as a GTP-hydrolysis-dependent molecular chaperone, activating the urease apoprotein by helping to assemble the nickel containing metallocenter of UreC. The UreE protein probably delivers the nickel.

It localises to the cytoplasm. Facilitates the functional incorporation of the urease nickel metallocenter. This process requires GTP hydrolysis, probably effectuated by UreG. In Nitrosococcus oceani (strain ATCC 19707 / BCRC 17464 / JCM 30415 / NCIMB 11848 / C-107), this protein is Urease accessory protein UreG.